We begin with the raw amino-acid sequence, 341 residues long: uncharacterized protein (341 aa).

Active-site residues include S111, D247, and H275.

Belongs to the DmpD/TodF/XylF esterase family.

This is an uncharacterized protein from Mycobacterium bovis (strain ATCC BAA-935 / AF2122/97).